Reading from the N-terminus, the 413-residue chain is MNIYAVGGAIRDDLLGVPVQDRDYVVVGATPEQMVAQGFRPVGKDFPVFLHPDTQEEYALARTERKTAAGYHGFQFYFAPDVTLDEDLARRDLTINAMAREVSPEGALVGPVIDPFDGQADLHARVFRHVGDAFVEDPVRILRIARFAARFADFTVADDTLALMRRMVDAGEADALVAERVWQEIARGLMEAKPSRMFAVLRECGALARVLPEVDALWGVPQRADYHPEVDTGVHVMMVVDYAAKQGYSLPVRFAALTHDLGKATTPADVLPRHVGHEGRSVELIKPLCERLRVPNECRDLALVVAREHGNLHRVMEMGAAALVRFFERSDALRKPARFAEMLQACESDARGRLGLDTQPYPQAERLRVALVAARSVDAGAIARGVGDDVMQIKDAVHRARVEAVKQALAIGE.

The ATP site is built by Gly8 and Arg11. Gly8 and Arg11 together coordinate CTP. Residues Asp21 and Asp23 each contribute to the Mg(2+) site. Residues Arg91, Arg143, and Arg146 each coordinate ATP. CTP contacts are provided by Arg91, Arg143, and Arg146. Positions 232 to 333 constitute an HD domain; the sequence is TGVHVMMVVD…VRFFERSDAL (102 aa).

The protein belongs to the tRNA nucleotidyltransferase/poly(A) polymerase family. Bacterial CCA-adding enzyme type 1 subfamily. As to quaternary structure, monomer. Can also form homodimers and oligomers. It depends on Mg(2+) as a cofactor. The cofactor is Ni(2+).

The catalysed reaction is a tRNA precursor + 2 CTP + ATP = a tRNA with a 3' CCA end + 3 diphosphate. It catalyses the reaction a tRNA with a 3' CCA end + 2 CTP + ATP = a tRNA with a 3' CCACCA end + 3 diphosphate. Its function is as follows. Catalyzes the addition and repair of the essential 3'-terminal CCA sequence in tRNAs without using a nucleic acid template. Adds these three nucleotides in the order of C, C, and A to the tRNA nucleotide-73, using CTP and ATP as substrates and producing inorganic pyrophosphate. tRNA 3'-terminal CCA addition is required both for tRNA processing and repair. Also involved in tRNA surveillance by mediating tandem CCA addition to generate a CCACCA at the 3' terminus of unstable tRNAs. While stable tRNAs receive only 3'-terminal CCA, unstable tRNAs are marked with CCACCA and rapidly degraded. This is Multifunctional CCA protein from Burkholderia ambifaria (strain ATCC BAA-244 / DSM 16087 / CCUG 44356 / LMG 19182 / AMMD) (Burkholderia cepacia (strain AMMD)).